The following is a 559-amino-acid chain: 5-epiaristolochene synthase (559 aa).

Mg(2+) contacts are provided by Asp-312, Asp-316, Asp-455, Thr-459, and Glu-463. The DDXXD motif motif lies at 312–316 (DDTYD).

The protein belongs to the terpene synthase family. Monomer. The cofactor is Mg(2+). In terms of tissue distribution, expressed only in treated leaves an not detected in control leaves.

The protein resides in the cytoplasm. The enzyme catalyses (2E,6E)-farnesyl diphosphate = (+)-5-epi-aristolochene + diphosphate. The protein operates within secondary metabolite biosynthesis; terpenoid biosynthesis. Functionally, catalyzes the cyclization of trans,trans-farnesyl diphosphate (FPP) to the bicyclic intermediate 5-epi-aristolochene, initial step in the conversion of FPP to the sesquiterpenoid antifungal phytoalexin capsidiol. Produces germacrene A as an enzyme-bound intermediate that is not released by the enzyme, but is further cyclized to produce the bicyclic 5-epi-aristolochene. In Capsicum annuum (Capsicum pepper), this protein is 5-epiaristolochene synthase (EAS).